The primary structure comprises 57 residues: MFTLKKSLLLLFFLGTINLSLCEQERNAEEERRDDLGERQAEVEKRFFPIVGKLLSG.

Positions 1–22 are cleaved as a signal peptide; the sequence is MFTLKKSLLLLFFLGTINLSLC. A propeptide spanning residues 23-46 is cleaved from the precursor; that stretch reads EQERNAEEERRDDLGERQAEVEKR. Ser-56 carries the serine amide modification.

This sequence belongs to the frog skin active peptide (FSAP) family. Temporin subfamily. As to expression, expressed by the skin glands.

The protein localises to the secreted. Functionally, antimicrobial peptide with weak activity against Gram-positive and Gram-negative bacteria and against fungi. Has been tested against S.aureus (MIC=15.0 ug/mL), B.pumilus (no activity detected), B.cereus (no activity detected), E.coli (MIC=30.0 ug/mL), B.dysenteriae (MIC=60.0 ug/mL), A.cacoaceticus (MIC=75.0 ug/mL), P.aeruginosa (MIC=25.0 ug/mL) and C.albicans (MIC=15.0 ug/mL). Also shows a weak hemolytic activity. The chain is Temporin-ALk from Amolops loloensis (Lolokou Sucker Frog).